A 363-amino-acid polypeptide reads, in one-letter code: MIHQKMIGKTRRLDFTTLFFLITLSLIVNSFIFNNLLIICIFLVFFSICILITNYGLKIIKQLNLLQNIRDTGPSFHFNKKNTPTMGGIFIILPLLLLLLIVNHYFYSMGIILLFFGSLSFFIIGFLDDYLSIKKKKNIGLRSTQKFILQSLISILFIVLAYQNGYINSLITVSNNWAIDTNIVIFPICFVTLVGLSNAVNLTDGLDGLASGCGSIVFYGLGTEIFIKGQQELIIYGLIAYAMSGLCVGFLKFNKYPAKIFMGDTGSLTIGATLGYISILTNSYFTLFIISGIFVIEALSVIIQVSFFKITKKIFKRGKRVFLMTPIHHHFELSGMKEEKIVENFWKINILLVILGIVLKINL.

10 helical membrane-spanning segments follow: residues 15–33, 82–102, 106–126, 147–167, 183–203, 207–227, 233–253, 260–280, 285–305, and 341–361; these read FTTLFFLITLSLIVNSFIF, NTPTMGGIFIILPLLLLLLIV, FYSMGIILLFFGSLSFFIIGF, FILQSLISILFIVLAYQNGYI, IVIFPICFVTLVGLSNAVNLT, DGLASGCGSIVFYGLGTEIFI, LIIYGLIAYAMSGLCVGFLKF, IFMGDTGSLTIGATLGYISIL, FTLFIISGIFVIEALSVIIQV, and IVENFWKINILLVILGIVLKI.

The protein belongs to the glycosyltransferase 4 family. MraY subfamily. The cofactor is Mg(2+).

Its subcellular location is the cell inner membrane. It catalyses the reaction UDP-N-acetyl-alpha-D-muramoyl-L-alanyl-gamma-D-glutamyl-meso-2,6-diaminopimeloyl-D-alanyl-D-alanine + di-trans,octa-cis-undecaprenyl phosphate = di-trans,octa-cis-undecaprenyl diphospho-N-acetyl-alpha-D-muramoyl-L-alanyl-D-glutamyl-meso-2,6-diaminopimeloyl-D-alanyl-D-alanine + UMP. The protein operates within cell wall biogenesis; peptidoglycan biosynthesis. In terms of biological role, catalyzes the initial step of the lipid cycle reactions in the biosynthesis of the cell wall peptidoglycan: transfers peptidoglycan precursor phospho-MurNAc-pentapeptide from UDP-MurNAc-pentapeptide onto the lipid carrier undecaprenyl phosphate, yielding undecaprenyl-pyrophosphoryl-MurNAc-pentapeptide, known as lipid I. This chain is Phospho-N-acetylmuramoyl-pentapeptide-transferase, found in Prochlorococcus marinus (strain MIT 9515).